An 899-amino-acid polypeptide reads, in one-letter code: Plasma membrane ATPase (899 aa).

A disordered region spans residues 1-72 (MSAATEPTKE…TDPSYGLTSD (72 aa)). Over 1 to 96 (MSAATEPTKE…SEETENLFVK (96 aa)) the chain is Cytoplasmic. Positions 17–29 (DSDDEDEDIDQLI) are enriched in acidic residues. Residues 97-117 (FLMFFIGPIQFVMEAAAILAA) traverse the membrane as a helical segment. At 118-121 (GLED) the chain is on the extracellular side. The chain crosses the membrane as a helical span at residues 122–141 (WVDFGVICGLLFLNAAVGFI). The Cytoplasmic segment spans residues 142–272 (QEYQAGSIVD…GSGHFTEVLN (131 aa)). The helical transmembrane segment at 273-294 (GIGTILLILVIVTLLLVWVASF) threads the bilayer. Topologically, residues 295-305 (YRTNKIVRILR) are extracellular. The chain crosses the membrane as a helical span at residues 306-328 (YTLAITIVGVPVGLPAVVTTTMA). Topologically, residues 329 to 700 (VGAAYLAKKQ…IAILNRSLNI (372 aa)) are cytoplasmic. The active-site 4-aspartylphosphate intermediate is the aspartate 359. Aspartate 615 and aspartate 619 together coordinate Mg(2+). A helical membrane pass occupies residues 701–719 (DLVVFIAIFADVATLAIAY). At 720–735 (DNAPYSPKPVKWNLRR) the chain is on the extracellular side. Residues 736 to 755 (LWGMSVILGIILAIGTWITL) form a helical membrane-spanning segment. At 756–805 (TTMFVPKGGIIQNFGSIDGVLFLQISLTENWLIFITRAAGPFWSSIPSWQ) the chain is on the cytoplasmic side. Residues 806 to 826 (LSGAVLIVDIIATMFCLFGWW) traverse the membrane as a helical segment. Residues 827 to 838 (SQNWNDIVTVVR) are Extracellular-facing. The helical transmembrane segment at 839 to 855 (VWIFSFGVFCVMGGAYY) threads the bilayer. Over 856 to 899 (MMSESEAFDRFMNGKSRRDKPSGRSVEDFLMAMQRVSTQHEKEN) the chain is Cytoplasmic.

This sequence belongs to the cation transport ATPase (P-type) (TC 3.A.3) family. Type IIIA subfamily.

It localises to the cell membrane. It carries out the reaction ATP + H2O + H(+)(in) = ADP + phosphate + 2 H(+)(out). Activated by high pH or also by potassium ions when the medium pH is low. Functionally, the plasma membrane ATPase of plants and fungi is a hydrogen ion pump. The proton gradient it generates drives the active transport of nutrients by H(+)-symport. The resulting external acidification and/or internal alkinization may mediate growth responses. This chain is Plasma membrane ATPase (PMA1), found in Kluyveromyces lactis (strain ATCC 8585 / CBS 2359 / DSM 70799 / NBRC 1267 / NRRL Y-1140 / WM37) (Yeast).